The primary structure comprises 306 residues: MPEAGFQATNAFTECKFTCTSGKCLYLGSLVCNQQNDCGDNSDEENCLLVTEHPPPGIFNSELEFAQILIIVVVVTVMVVVVVCLLNHYKVSTRSFINRPNQSQRQEDGLQPEGSLWPSDSSVQRPGASEIMCAPRGRDRFTTPSFIQRDPFSRFQPTYPYVQHEIDLPPTISLSDGEEPPPYQGPCTLQLRDPEQQMELNRESVRAPPNRTVFDSDLIDISMYNGGPCPPSSHSGISAATCSSNGRMEGPPPTYSEVMGHYPGTSFFHHQHSNTHRGSRPQFQPNNSEGTIVPIKGKDRKPGDLV.

The Lumenal portion of the chain corresponds to M1–E64. One can recognise an LDL-receptor class A domain in the interval A11–L48. 2 disulfides stabilise this stretch: C19/C38 and C32/C47. Residues F65–L85 traverse the membrane as a helical segment. Over L86–V306 the chain is Cytoplasmic. Residues P100 to G127 are disordered. The PPxY motif 1 signature appears at P180–Y183. The SMAD interaction motif (SIM) motif lies at P208–R211. A PPxY motif 2 motif is present at residues P252 to Y255. A disordered region spans residues F268–V306. Residues H269 to S279 show a composition bias toward basic residues. Residues P281–G290 show a composition bias toward polar residues. Residues K296–V306 are compositionally biased toward basic and acidic residues.

This sequence belongs to the PMEPA1 family. As to quaternary structure, interacts with PMEPA1. Interacts (via the SMAD interaction motif) with SMAD2 and SMAD3. Detected in all tissues tested.

It localises to the early endosome membrane. Functionally, functions as a negative regulator of TGF-beta signaling and thereby probably plays a role in cell proliferation, differentiation, apoptosis, motility, extracellular matrix production and immunosuppression. In the canonical TGF-beta pathway, ZFYVE9/SARA recruits the intracellular signal transducer and transcriptional modulators SMAD2 and SMAD3 to the TGF-beta receptor. Phosphorylated by the receptor, SMAD2 and SMAD3 then form a heteromeric complex with SMAD4 that translocates to the nucleus to regulate transcription. Through interaction with SMAD2 and SMAD3, LDLRAD4 may compete with ZFYVE9 and SMAD4 and prevent propagation of the intracellular signal. The sequence is that of Low-density lipoprotein receptor class A domain-containing protein 4 (Ldlrad4) from Mus musculus (Mouse).